The primary structure comprises 262 residues: Pyridoxine 5'-phosphate synthase (262 aa).

Asn6 is a binding site for 3-amino-2-oxopropyl phosphate. 8 to 9 is a 1-deoxy-D-xylulose 5-phosphate binding site; sequence DH. Arg17 serves as a coordination point for 3-amino-2-oxopropyl phosphate. Catalysis depends on His43, which acts as the Proton acceptor. 1-deoxy-D-xylulose 5-phosphate-binding residues include Arg45 and His50. Glu70 acts as the Proton acceptor in catalysis. Thr102 lines the 1-deoxy-D-xylulose 5-phosphate pocket. His215 serves as the catalytic Proton donor. Residues Gly216 and 237–238 contribute to the 3-amino-2-oxopropyl phosphate site; that span reads GH.

It belongs to the PNP synthase family. In terms of assembly, homooctamer; tetramer of dimers.

Its subcellular location is the cytoplasm. It catalyses the reaction 3-amino-2-oxopropyl phosphate + 1-deoxy-D-xylulose 5-phosphate = pyridoxine 5'-phosphate + phosphate + 2 H2O + H(+). It functions in the pathway cofactor biosynthesis; pyridoxine 5'-phosphate biosynthesis; pyridoxine 5'-phosphate from D-erythrose 4-phosphate: step 5/5. Catalyzes the complicated ring closure reaction between the two acyclic compounds 1-deoxy-D-xylulose-5-phosphate (DXP) and 3-amino-2-oxopropyl phosphate (1-amino-acetone-3-phosphate or AAP) to form pyridoxine 5'-phosphate (PNP) and inorganic phosphate. The protein is Pyridoxine 5'-phosphate synthase of Helicobacter pylori (strain J99 / ATCC 700824) (Campylobacter pylori J99).